The sequence spans 914 residues: Alanine--tRNA ligase (914 aa).

Histidine 608, histidine 612, cysteine 711, and histidine 715 together coordinate Zn(2+).

Belongs to the class-II aminoacyl-tRNA synthetase family. Zn(2+) is required as a cofactor.

It localises to the cytoplasm. It carries out the reaction tRNA(Ala) + L-alanine + ATP = L-alanyl-tRNA(Ala) + AMP + diphosphate. Its function is as follows. Catalyzes the attachment of alanine to tRNA(Ala) in a two-step reaction: alanine is first activated by ATP to form Ala-AMP and then transferred to the acceptor end of tRNA(Ala). Also edits incorrectly charged Ser-tRNA(Ala) and Gly-tRNA(Ala) via its editing domain. In Methanoregula boonei (strain DSM 21154 / JCM 14090 / 6A8), this protein is Alanine--tRNA ligase.